Reading from the N-terminus, the 240-residue chain is Dephospho-CoA kinase domain-containing protein (240 aa).

Positions 3–207 constitute a DPCK domain; it reads LVGLTGGIAS…RSMEYLPLRL (205 aa). Residue 8–15 participates in ATP binding; the sequence is GGIASGKS.

Belongs to the CoaE family.

The polypeptide is Dephospho-CoA kinase domain-containing protein (Dcakd) (Rattus norvegicus (Rat)).